The following is a 216-amino-acid chain: Sporozoite antigen (216 aa).

The tract at residues 194-216 (QQQQPSSYGAPPASSQQPSGFFW) is disordered.

This is Sporozoite antigen from Eimeria tenella (Coccidian parasite).